A 116-amino-acid chain; its full sequence is Ribonuclease P protein component (116 aa).

Belongs to the RnpA family. In terms of assembly, consists of a catalytic RNA component (M1 or rnpB) and a protein subunit.

The enzyme catalyses Endonucleolytic cleavage of RNA, removing 5'-extranucleotides from tRNA precursor.. In terms of biological role, RNaseP catalyzes the removal of the 5'-leader sequence from pre-tRNA to produce the mature 5'-terminus. It can also cleave other RNA substrates such as 4.5S RNA. The protein component plays an auxiliary but essential role in vivo by binding to the 5'-leader sequence and broadening the substrate specificity of the ribozyme. The protein is Ribonuclease P protein component of Leuconostoc mesenteroides subsp. mesenteroides (strain ATCC 8293 / DSM 20343 / BCRC 11652 / CCM 1803 / JCM 6124 / NCDO 523 / NBRC 100496 / NCIMB 8023 / NCTC 12954 / NRRL B-1118 / 37Y).